A 925-amino-acid polypeptide reads, in one-letter code: Protein translocase subunit SecA (925 aa).

ATP-binding positions include Gln87, Gly105–Thr109, and Asp531. The interval Ala867 to Pro909 is disordered. The segment covering Gln895–Arg906 has biased composition (basic and acidic residues). 4 residues coordinate Zn(2+): Cys910, Cys912, Cys921, and His922.

This sequence belongs to the SecA family. Monomer and homodimer. Part of the essential Sec protein translocation apparatus which comprises SecA, SecYEG and auxiliary proteins SecDF-YajC and YidC. Zn(2+) serves as cofactor.

The protein resides in the cell inner membrane. The protein localises to the cytoplasm. The enzyme catalyses ATP + H2O + cellular proteinSide 1 = ADP + phosphate + cellular proteinSide 2.. Part of the Sec protein translocase complex. Interacts with the SecYEG preprotein conducting channel. Has a central role in coupling the hydrolysis of ATP to the transfer of proteins into and across the cell membrane, serving both as a receptor for the preprotein-SecB complex and as an ATP-driven molecular motor driving the stepwise translocation of polypeptide chains across the membrane. The protein is Protein translocase subunit SecA of Thioalkalivibrio sulfidiphilus (strain HL-EbGR7).